Consider the following 263-residue polypeptide: Small ribosomal subunit protein uS3 (263 aa).

Positions 39-107 (VREYLKKKLK…PVHVNIEEIR (69 aa)) constitute a KH type-2 domain. Residues 211–263 (GELPPEAATPREEERRPRRAPRGDRPDGGRPGRPGGRGRGPRKADAAPAPEGE) are disordered. Residues 219–240 (TPREEERRPRRAPRGDRPDGGR) are compositionally biased toward basic and acidic residues.

This sequence belongs to the universal ribosomal protein uS3 family. As to quaternary structure, part of the 30S ribosomal subunit. Forms a tight complex with proteins S10 and S14.

Its function is as follows. Binds the lower part of the 30S subunit head. Binds mRNA in the 70S ribosome, positioning it for translation. This chain is Small ribosomal subunit protein uS3, found in Bordetella petrii (strain ATCC BAA-461 / DSM 12804 / CCUG 43448).